The following is a 265-amino-acid chain: MSPAEPTREESVYKAKLAEQAERYEEMVEYMERVARAAGGASGGEELTVEERNLLSVAYKNVIGARRASWRIISSIEQKEEGRGNDAHAATIRSYRGKIEAELARICDGILALLDSHLVPSAGAAESKVFYLKMKGDYHRYLAEFKSGDERKQAAESTMNAYKAAQDIALADLAPTHPIRLGLALNFSVFYYEILNSPDRACNLAKQAFDEAISELDSLGEESYKDSTLIMQLLRDNLTLWTSDANDDGGDEIKEAAAPKEPGDQ.

Residues 244-265 are disordered; the sequence is DANDDGGDEIKEAAAPKEPGDQ. The segment covering 251-265 has biased composition (basic and acidic residues); the sequence is DEIKEAAAPKEPGDQ.

Belongs to the 14-3-3 family. As to quaternary structure, interacts with BZR1. Interacts with ABI5.

Is associated with a DNA binding complex that binds to the G box, a well-characterized cis-acting DNA regulatory element found in plant genes. The chain is 14-3-3-like protein GF14-D (GF14D) from Oryza sativa subsp. japonica (Rice).